Here is a 349-residue protein sequence, read N- to C-terminus: Fe(3+) ions import ATP-binding protein FbpC (349 aa).

One can recognise an ABC transporter domain in the interval 7–237; that stretch reads LVLKNVTKAF…PNSLFLANFM (231 aa). 39 to 46 contacts ATP; that stretch reads GPSGCGKT.

This sequence belongs to the ABC transporter superfamily. Fe(3+) ion importer (TC 3.A.1.10) family. As to quaternary structure, the complex is composed of two ATP-binding proteins (FbpC), two transmembrane proteins (FbpB) and a solute-binding protein (FbpA).

It is found in the cell inner membrane. It carries out the reaction Fe(3+)(out) + ATP + H2O = Fe(3+)(in) + ADP + phosphate + H(+). Its function is as follows. Part of the ABC transporter complex FbpABC involved in Fe(3+) ions import. Responsible for energy coupling to the transport system. This chain is Fe(3+) ions import ATP-binding protein FbpC, found in Pasteurella multocida (strain Pm70).